A 479-amino-acid chain; its full sequence is mRNA export factor ICP27 homolog (479 aa).

Over residues 1 to 15 (MVPSQRLSRTSSISS) the composition is skewed to low complexity. Disordered regions lie at residues 1-78 (MVPS…SSVV) and 92-210 (KWDL…NKPW). Residues 35–44 (TDCDMDPMEG) show a composition bias toward acidic residues. The segment covering 132-142 (EVHGCTDESYG) has biased composition (basic and acidic residues). Cysteine 354, histidine 445, cysteine 449, and cysteine 454 together coordinate Zn(2+). A CHC2-type zinc finger spans residues 354–454 (CFLPNTRDYN…HTRDCRSASC (101 aa)).

It belongs to the HHV-1 ICP27 protein family. Interacts with host XPO1 and with the XPO1 export pathway components small GTPase RAN and nucleoporin NUP214. Interacts with host SPEN, OTT1 and OTT3. Interacts with host SRSF1, SRSF3, SRSF7 and SRPK1. Interacts with host DHX9; this interaction may have an inhibitory effect on virion production. Interacts (via N-terminus) with host NXF1; this interaction plays a role in mRNA export. Post-translationally, phosphorylated by cellular protein kinase CK2.

It is found in the host nucleus. It localises to the host cytoplasm. Functionally, promotes the nuclear export of a subset of early and late viral mRNAs by interacting with mRNAs and cellular export proteins. Additionally may prevent the establishment of cellular antiviral state, by acting as an alternative splicing factor for cellular RNAs such as STAT1, resulting in a STAT1 mRNA incapable of producing the STAT1alpha isoform. The protein is mRNA export factor ICP27 homolog of Homo sapiens (Human).